The sequence spans 336 residues: Phosphate acyltransferase (336 aa).

It belongs to the PlsX family. Homodimer. Probably interacts with PlsY.

It localises to the cytoplasm. The enzyme catalyses a fatty acyl-[ACP] + phosphate = an acyl phosphate + holo-[ACP]. The protein operates within lipid metabolism; phospholipid metabolism. Its function is as follows. Catalyzes the reversible formation of acyl-phosphate (acyl-PO(4)) from acyl-[acyl-carrier-protein] (acyl-ACP). This enzyme utilizes acyl-ACP as fatty acyl donor, but not acyl-CoA. The chain is Phosphate acyltransferase from Pseudomonas aeruginosa (strain UCBPP-PA14).